The following is a 35-amino-acid chain: Potassium channel toxin (35 aa).

Intrachain disulfides connect Cys6-Cys25, Cys11-Cys30, and Cys15-Cys32.

The protein belongs to the short scorpion toxin superfamily. Potassium channel inhibitor family. Alpha-KTx 21 subfamily. In terms of tissue distribution, expressed by the venom gland.

The protein localises to the secreted. In terms of biological role, toxin that blocks voltage-gated potassium channels (Kv). This is Potassium channel toxin from Tityus metuendus (Scorpion).